Here is a 178-residue protein sequence, read N- to C-terminus: Translation initiation factor IF-3 (178 aa).

The protein belongs to the IF-3 family. In terms of assembly, monomer.

Its subcellular location is the cytoplasm. IF-3 binds to the 30S ribosomal subunit and shifts the equilibrium between 70S ribosomes and their 50S and 30S subunits in favor of the free subunits, thus enhancing the availability of 30S subunits on which protein synthesis initiation begins. The sequence is that of Translation initiation factor IF-3 from Ureaplasma parvum serovar 3 (strain ATCC 700970).